The chain runs to 260 residues: uncharacterized protein (260 aa).

Belongs to the methyltransferase superfamily.

The protein localises to the cytoplasm. Its subcellular location is the nucleus. Its function is as follows. Probable methyltransferase. This is an uncharacterized protein from Schizosaccharomyces pombe (strain 972 / ATCC 24843) (Fission yeast).